The chain runs to 321 residues: Mas-related G-protein coupled receptor member H (321 aa).

Residues 1-35 (MEPLATTLCPQECTQTTRNETPNETTWSSEHVTKY) are Extracellular-facing. Asn23 is a glycosylation site (N-linked (GlcNAc...) asparagine). Residues 36-56 (TYISISLVICSLGLVGNGLLI) form a helical membrane-spanning segment. Residues 57–71 (WFLIFCIKRKPFTIY) are Cytoplasmic-facing. The chain crosses the membrane as a helical span at residues 72–92 (ILHLAFADFMVLLCSSIIQLV). The Extracellular segment spans residues 93–102 (NTFHIYDSTL). A helical transmembrane segment spans residues 103-126 (VSYAVLFMIFGYNTGLHLLTAISV). The Cytoplasmic segment spans residues 127 to 147 (ERCLSVLYPIWYHCRRPKHQS). Residues 148–168 (TVACTLLWALSVLVSGLENFF) form a helical membrane-spanning segment. The Extracellular segment spans residues 169–188 (CILEVKPQFPECRYVYIFSC). The helical transmembrane segment at 189–209 (TLTFLVFVPLMVFSNLILFIQ) threads the bilayer. At 210-225 (VCCNLKPRQPAKLYVI) the chain is on the cytoplasmic side. Residues 226 to 246 (IMATVILFLVFAMPMKVLLII) form a helical membrane-spanning segment. Residue Gly247 is a topological domain, extracellular. A helical membrane pass occupies residues 248–271 (YYSNSTDASVWKSLPYLNMLSTIN). The Cytoplasmic segment spans residues 272–320 (CSINPIVYFVVGSLRRKRSRKSLKEALQKVFEEKPVVASRENEVQFSLP).

This sequence belongs to the G-protein coupled receptor 1 family. Mas subfamily.

The protein resides in the cell membrane. Orphan receptor. May regulate nociceptor function and/or development, including the sensation or modulation of pain. The chain is Mas-related G-protein coupled receptor member H (Mrgprh) from Rattus norvegicus (Rat).